Here is a 178-residue protein sequence, read N- to C-terminus: Adenine phosphoribosyltransferase (178 aa).

Belongs to the purine/pyrimidine phosphoribosyltransferase family. As to quaternary structure, homodimer.

The protein resides in the cytoplasm. The enzyme catalyses AMP + diphosphate = 5-phospho-alpha-D-ribose 1-diphosphate + adenine. The protein operates within purine metabolism; AMP biosynthesis via salvage pathway; AMP from adenine: step 1/1. Its function is as follows. Catalyzes a salvage reaction resulting in the formation of AMP, that is energically less costly than de novo synthesis. This is Adenine phosphoribosyltransferase from Mycoplasmoides gallisepticum (strain R(low / passage 15 / clone 2)) (Mycoplasma gallisepticum).